A 191-amino-acid polypeptide reads, in one-letter code: Protein GrpE (191 aa).

The protein belongs to the GrpE family. Homodimer.

It localises to the cytoplasm. Functionally, participates actively in the response to hyperosmotic and heat shock by preventing the aggregation of stress-denatured proteins, in association with DnaK and GrpE. It is the nucleotide exchange factor for DnaK and may function as a thermosensor. Unfolded proteins bind initially to DnaJ; upon interaction with the DnaJ-bound protein, DnaK hydrolyzes its bound ATP, resulting in the formation of a stable complex. GrpE releases ADP from DnaK; ATP binding to DnaK triggers the release of the substrate protein, thus completing the reaction cycle. Several rounds of ATP-dependent interactions between DnaJ, DnaK and GrpE are required for fully efficient folding. The polypeptide is Protein GrpE (Listeria monocytogenes serotype 1/2a (strain 10403S)).